The sequence spans 268 residues: MRLIIRPTYEDVSKWAANHVAQKIKEFSPTKKKPFILGLPTGSSPIGMYKNLIELNKSGKISFQNVITFNMDEYIGIEQNHPESYHSFMWKNFFSHIDIKKENINILNGNALNLEKECEEYEKKIKSFGGIMLFVGGIGPDGHIAFNEPGSSLTSRTRIKTLTQDTIIANSRFFEGNVNKVPKSALTVGIGTIMDSQEILIIVNGHNKARALKHAIEKGINHMWTISALQLHKNAIIVSDKNATYELKVGTVEYFNDIERKNFNNDLK.

The Proton acceptor; for enolization step role is filled by D72. Residue D141 is the For ring-opening step of the active site. H143 (proton acceptor; for ring-opening step) is an active-site residue. E148 acts as the For ring-opening step in catalysis.

Belongs to the glucosamine/galactosamine-6-phosphate isomerase family. NagB subfamily.

It catalyses the reaction alpha-D-glucosamine 6-phosphate + H2O = beta-D-fructose 6-phosphate + NH4(+). It functions in the pathway amino-sugar metabolism; N-acetylneuraminate degradation; D-fructose 6-phosphate from N-acetylneuraminate: step 5/5. Allosterically activated by N-acetylglucosamine 6-phosphate (GlcNAc6P). Its function is as follows. Catalyzes the reversible isomerization-deamination of glucosamine 6-phosphate (GlcN6P) to form fructose 6-phosphate (Fru6P) and ammonium ion. This Borreliella afzelii (strain PKo) (Borrelia afzelii) protein is Glucosamine-6-phosphate deaminase.